The following is a 291-amino-acid chain: Probable endonuclease 4 (291 aa).

The Zn(2+) site is built by His72, His112, Glu147, Asp181, His184, His215, Asp228, His230, and Glu260.

The protein belongs to the AP endonuclease 2 family. The cofactor is Zn(2+).

The enzyme catalyses Endonucleolytic cleavage to 5'-phosphooligonucleotide end-products.. Functionally, endonuclease IV plays a role in DNA repair. It cleaves phosphodiester bonds at apurinic or apyrimidinic (AP) sites, generating a 3'-hydroxyl group and a 5'-terminal sugar phosphate. This Mycoplasma genitalium (strain ATCC 33530 / DSM 19775 / NCTC 10195 / G37) (Mycoplasmoides genitalium) protein is Probable endonuclease 4.